Consider the following 407-residue polypeptide: Eukaryotic initiation factor 4A-II (407 aa).

The interval 1 to 23 (MSGGSADYSRDHGGPEGMEPDGV) is disordered. The Q motif motif lies at 33 to 61 (DNFDDMNLKESLLRGIYAYGFEKPSAIQQ). A Helicase ATP-binding domain is found at 64 to 235 (IIPCIKGYDV…KKFMREPIRI (172 aa)). 77–84 (AQSGTGKT) contacts ATP. A DEAD box motif is present at residues 183–186 (DEAD). The 162-residue stretch at 246–407 (GIKQFYINVE…EMPMNVADLI (162 aa)) folds into the Helicase C-terminal domain.

Belongs to the DEAD box helicase family. eIF4A subfamily. In terms of assembly, eIF4F is a multi-subunit complex, the composition of which varies with external and internal environmental conditions. It is composed of at least EIF4A, EIF4E and EIF4G1/EIFFG3. Interacts with EIF4E.

The catalysed reaction is ATP + H2O = ADP + phosphate + H(+). Functionally, ATP-dependent RNA helicase which is a subunit of the eIF4F complex involved in cap recognition and is required for mRNA binding to ribosome. In the current model of translation initiation, eIF4A unwinds RNA secondary structures in the 5'-UTR of mRNAs which is necessary to allow efficient binding of the small ribosomal subunit, and subsequent scanning for the initiator codon. The chain is Eukaryotic initiation factor 4A-II (EIF4A2) from Gallus gallus (Chicken).